Reading from the N-terminus, the 388-residue chain is MNKSKGGLQLTVQTLSLVAGFMVWSIIAPLMPMISQDIKITSSQISIVLAIPVILGSVLRIPFGYLTNIIGAKWVFFSSFIILLFPIFLLSQAQSVNMLMLAGFFLGVGGAVFSVGVTSIPKYFPKDKVGLANGIYGMGNLGTAVSSFLAPPIAGAIGWQSTVRLYLIVMAVFAIVMFFLGDAKEPKVKIPLVAQTKDLLKDLRTYYLSFWYFITFGSFVAFGIFLPKYLVDHYELTTVDAGIRAGIFIAIATFLRPLGGIIGDKIDAVKALKVDFLFMIIGAIILGIANDMILFTVGCLTVSVCAGIGNGLVFKLVPQYFQKEAGVANGIVSMMGGLGGFFPPLVITYVTSITGTSHLAFIFLALFGVLALVTMWHLSKKNRSLAYK.

The next 12 helical transmembrane spans lie at 14–34 (TLSL…MPMI), 45–65 (ISIV…PFGY), 69–89 (IIGA…PIFL), 98–118 (MLML…VGVT), 139–159 (GNLG…AIGW), 161–181 (STVR…FFLG), 206–226 (YYLS…GIFL), 242–262 (GIRA…GGII), 276–296 (FLFM…ILFT), 297–317 (VGCL…FKLV), 330–350 (GIVS…ITYV), and 359–379 (LAFI…WHLS).

This sequence belongs to the major facilitator superfamily. Nitrate/nitrite porter (TC 2.A.1.8) family.

The protein localises to the cell membrane. In terms of biological role, probably required for nitrate uptake under anoxic conditions. Also possibly involved in excretion of nitrite produced by the dissimilatory reduction of nitrate. This is Probable nitrate transporter NarT (narT) from Staphylococcus carnosus (strain TM300).